The following is a 62-amino-acid chain: UPF0370 protein ESA_00777 (62 aa).

Residues 4-24 (LGKYWWVLVLVFLLGVLLNVI) traverse the membrane as a helical segment. Over residues 36-51 (MDNRPELPPHRDFNDK) the composition is skewed to basic and acidic residues. The tract at residues 36–62 (MDNRPELPPHRDFNDKWDDEDDWPKKK) is disordered. The span at 52–62 (WDDEDDWPKKK) shows a compositional bias: acidic residues.

The protein belongs to the UPF0370 family.

The protein localises to the cell membrane. This is UPF0370 protein ESA_00777 from Cronobacter sakazakii (strain ATCC BAA-894) (Enterobacter sakazakii).